The chain runs to 302 residues: Phosphatidylglycerol--prolipoprotein diacylglyceryl transferase (302 aa).

Transmembrane regions (helical) follow at residues 19–39 (FGPL…LLGW), 67–87 (LVLW…FVFY), 108–128 (IWEG…AIIL), 143–163 (LIAP…FING), 203–223 (QLYE…FAIY), 232–252 (GALV…LENV), and 264–284 (LGLT…GWLL). R156 contacts a 1,2-diacyl-sn-glycero-3-phospho-(1'-sn-glycerol).

Belongs to the Lgt family.

The protein localises to the cell inner membrane. It catalyses the reaction L-cysteinyl-[prolipoprotein] + a 1,2-diacyl-sn-glycero-3-phospho-(1'-sn-glycerol) = an S-1,2-diacyl-sn-glyceryl-L-cysteinyl-[prolipoprotein] + sn-glycerol 1-phosphate + H(+). Its pathway is protein modification; lipoprotein biosynthesis (diacylglyceryl transfer). Its function is as follows. Catalyzes the transfer of the diacylglyceryl group from phosphatidylglycerol to the sulfhydryl group of the N-terminal cysteine of a prolipoprotein, the first step in the formation of mature lipoproteins. This chain is Phosphatidylglycerol--prolipoprotein diacylglyceryl transferase, found in Caulobacter vibrioides (strain ATCC 19089 / CIP 103742 / CB 15) (Caulobacter crescentus).